Here is a 144-residue protein sequence, read N- to C-terminus: uncharacterized protein (144 aa).

A helical transmembrane segment spans residues 72–90; sequence VAIGTSLIVGAGVAMEVSV.

This sequence to yeast YCL21w.

It is found in the membrane. This is an uncharacterized protein from Saccharomyces cerevisiae (strain ATCC 204508 / S288c) (Baker's yeast).